Consider the following 333-residue polypeptide: Adenosine deaminase (333 aa).

Positions 12 and 14 each coordinate Zn(2+). Substrate-binding residues include H14, D16, and G170. H197 contributes to the Zn(2+) binding site. The active-site Proton donor is E200. Zn(2+) is bound at residue D278. Residue D279 coordinates substrate.

This sequence belongs to the metallo-dependent hydrolases superfamily. Adenosine and AMP deaminases family. Adenosine deaminase subfamily. The cofactor is Zn(2+).

The catalysed reaction is adenosine + H2O + H(+) = inosine + NH4(+). It catalyses the reaction 2'-deoxyadenosine + H2O + H(+) = 2'-deoxyinosine + NH4(+). Functionally, catalyzes the hydrolytic deamination of adenosine and 2-deoxyadenosine. The chain is Adenosine deaminase from Escherichia coli (strain SE11).